The chain runs to 487 residues: Cobyric acid synthase (487 aa).

In terms of domain architecture, GATase cobBQ-type spans 249-435 (GIDIAIVRLP…IHGIFDEGDF (187 aa)). The Nucleophile role is filled by cysteine 330. The active site involves histidine 427.

Belongs to the CobB/CobQ family. CobQ subfamily.

It participates in cofactor biosynthesis; adenosylcobalamin biosynthesis. Its function is as follows. Catalyzes amidations at positions B, D, E, and G on adenosylcobyrinic A,C-diamide. NH(2) groups are provided by glutamine, and one molecule of ATP is hydrogenolyzed for each amidation. This Clostridium perfringens (strain SM101 / Type A) protein is Cobyric acid synthase.